Consider the following 264-residue polypeptide: S-adenosylmethionine decarboxylase proenzyme (264 aa).

Catalysis depends on S113, which acts as the Schiff-base intermediate with substrate; via pyruvic acid. S113 carries the pyruvic acid (Ser); by autocatalysis modification. H118 functions as the Proton acceptor; for processing activity in the catalytic mechanism. The active-site Proton donor; for catalytic activity is the C141.

It belongs to the prokaryotic AdoMetDC family. Type 2 subfamily. As to quaternary structure, heterooctamer of four alpha and four beta chains arranged as a tetramer of alpha/beta heterodimers. Pyruvate is required as a cofactor. Post-translationally, is synthesized initially as an inactive proenzyme. Formation of the active enzyme involves a self-maturation process in which the active site pyruvoyl group is generated from an internal serine residue via an autocatalytic post-translational modification. Two non-identical subunits are generated from the proenzyme in this reaction, and the pyruvate is formed at the N-terminus of the alpha chain, which is derived from the carboxyl end of the proenzyme. The post-translation cleavage follows an unusual pathway, termed non-hydrolytic serinolysis, in which the side chain hydroxyl group of the serine supplies its oxygen atom to form the C-terminus of the beta chain, while the remainder of the serine residue undergoes an oxidative deamination to produce ammonia and the pyruvoyl group blocking the N-terminus of the alpha chain.

The catalysed reaction is S-adenosyl-L-methionine + H(+) = S-adenosyl 3-(methylsulfanyl)propylamine + CO2. It participates in amine and polyamine biosynthesis; S-adenosylmethioninamine biosynthesis; S-adenosylmethioninamine from S-adenosyl-L-methionine: step 1/1. In terms of biological role, catalyzes the decarboxylation of S-adenosylmethionine to S-adenosylmethioninamine (dcAdoMet), the propylamine donor required for the synthesis of the polyamines spermine and spermidine from the diamine putrescine. The chain is S-adenosylmethionine decarboxylase proenzyme from Pseudomonas paraeruginosa (strain DSM 24068 / PA7) (Pseudomonas aeruginosa (strain PA7)).